The following is a 98-amino-acid chain: Citrate lyase acyl carrier protein 1 (98 aa).

O-(phosphoribosyl dephospho-coenzyme A)serine is present on serine 14.

Belongs to the CitD family. In terms of assembly, oligomer with a subunit composition of (alpha,beta,gamma)6.

Its subcellular location is the cytoplasm. Covalent carrier of the coenzyme of citrate lyase. The sequence is that of Citrate lyase acyl carrier protein 1 from Salmonella paratyphi A (strain ATCC 9150 / SARB42).